A 290-amino-acid chain; its full sequence is 4-diphosphocytidyl-2-C-methyl-D-erythritol kinase (290 aa).

Residue K10 is part of the active site. 95 to 105 (PVAAGLAGGSS) is an ATP binding site. Residue D137 is part of the active site.

Belongs to the GHMP kinase family. IspE subfamily.

The catalysed reaction is 4-CDP-2-C-methyl-D-erythritol + ATP = 4-CDP-2-C-methyl-D-erythritol 2-phosphate + ADP + H(+). It participates in isoprenoid biosynthesis; isopentenyl diphosphate biosynthesis via DXP pathway; isopentenyl diphosphate from 1-deoxy-D-xylulose 5-phosphate: step 3/6. Catalyzes the phosphorylation of the position 2 hydroxy group of 4-diphosphocytidyl-2C-methyl-D-erythritol. This Geobacillus kaustophilus (strain HTA426) protein is 4-diphosphocytidyl-2-C-methyl-D-erythritol kinase.